The following is a 376-amino-acid chain: Rhodopsin (376 aa).

The Extracellular segment spans residues 1 to 51 (MSLINEPSYSAYSWGGQGGYGNQTVVDKVLPEMLHLIDPHWYQFPPMNPLW). Asn22 carries N-linked (GlcNAc...) asparagine glycosylation. Residues 52 to 76 (HGLLGFVIGCLGFVSVVGNGMVIYI) form a helical membrane-spanning segment. Residues 77-88 (FSTTKGLRTPSN) lie on the Cytoplasmic side of the membrane. Residues 89 to 113 (LLVVNLAFSDFLMMLSMSPPMVINC) form a helical membrane-spanning segment. Residues 114–128 (YYETWVLGPFMCELY) lie on the Extracellular side of the membrane. The cysteines at positions 125 and 202 are disulfide-linked. A helical membrane pass occupies residues 129-148 (ALLGSLFGCGSIWTMVMIAL). The Cytoplasmic portion of the chain corresponds to 149 to 167 (DRYNVIVKGLAAKPMTNKT). The chain crosses the membrane as a helical span at residues 168-191 (AMLRILGIWAMSIAWTVFPLFGWN). Over 192 to 215 (RYVPEGNMTACGTDYLNKEWVSRS) the chain is Extracellular. A glycan (N-linked (GlcNAc...) asparagine) is linked at Asn198. The helical transmembrane segment at 216-243 (YILVYSVFVYFLPLATIIYSYWFIVQAV) threads the bilayer. Residues 244 to 278 (SAHEKQMREQAKKMNVASLRSAENANTSAECKLAK) lie on the Cytoplasmic side of the membrane. The chain crosses the membrane as a helical span at residues 279–302 (VALMTISLWFFAWTPYLVTDFSGI). The Extracellular portion of the chain corresponds to 303–309 (FEWGKIS). The chain crosses the membrane as a helical span at residues 310 to 334 (PLATIWCSLFAKANAVYNPIVYGIS). The residue at position 321 (Lys321) is an N6-(retinylidene)lysine. The Cytoplasmic segment spans residues 335 to 376 (HPKYRAALNKKFPSLACASEPDDTASQASGATTVSDEKSASA). The tract at residues 353 to 376 (SEPDDTASQASGATTVSDEKSASA) is disordered. The segment covering 358 to 368 (TASQASGATTV) has biased composition (polar residues).

Belongs to the G-protein coupled receptor 1 family. Opsin subfamily. Post-translationally, phosphorylated on some or all of the serine and threonine residues present in the C-terminal region.

It is found in the membrane. In terms of biological role, visual pigments are the light-absorbing molecules that mediate vision. They consist of an apoprotein, opsin, covalently linked to cis-retinal. The polypeptide is Rhodopsin (Sphodromantis sp. (Mantis)).